A 329-amino-acid polypeptide reads, in one-letter code: Capsular polysaccharide phosphotransferase WcwK (329 aa).

The protein belongs to the stealth family.

This Streptococcus pneumoniae protein is Capsular polysaccharide phosphotransferase WcwK (wcwK).